We begin with the raw amino-acid sequence, 454 residues long: Chromosomal replication initiator protein DnaA (454 aa).

Positions 1–83 (MMTDSMRLVW…RPLKVLLEVA (83 aa)) are domain I, interacts with DnaA modulators. The interval 83–115 (AECVAEAPETPEEAPQQLCLPAFADIPRPSSGR) is domain II. Positions 116–333 (LLNRDFTFDS…SGIKGLAARN (218 aa)) are domain III, AAA+ region. ATP contacts are provided by Gly-160, Gly-162, Lys-163, and Ser-164. The domain IV, binds dsDNA stretch occupies residues 334–454 (SIMGRGIDLK…LCGKIEAGEF (121 aa)).

Belongs to the DnaA family. Oligomerizes as a right-handed, spiral filament on DNA at oriC.

It is found in the cytoplasm. Functionally, plays an essential role in the initiation and regulation of chromosomal replication. ATP-DnaA binds to the origin of replication (oriC) to initiate formation of the DNA replication initiation complex once per cell cycle. Binds the DnaA box (a 9 base pair repeat at the origin) and separates the double-stranded (ds)DNA. Forms a right-handed helical filament on oriC DNA; dsDNA binds to the exterior of the filament while single-stranded (ss)DNA is stabiized in the filament's interior. The ATP-DnaA-oriC complex binds and stabilizes one strand of the AT-rich DNA unwinding element (DUE), permitting loading of DNA polymerase. After initiation quickly degrades to an ADP-DnaA complex that is not apt for DNA replication. Binds acidic phospholipids. This Desulfatibacillum aliphaticivorans protein is Chromosomal replication initiator protein DnaA.